The primary structure comprises 166 residues: Transcriptional repressor NrdR (166 aa).

Residues 3-34 fold into a zinc finger; sequence CPFCRNPDSRVVDSRMADDGSSIRRRRQCPEC. Positions 46 to 136 constitute an ATP-cone domain; sequence LSVIKRSGVG…VYQAFESLED (91 aa).

It belongs to the NrdR family. It depends on Zn(2+) as a cofactor.

Its function is as follows. Negatively regulates transcription of bacterial ribonucleotide reductase nrd genes and operons by binding to NrdR-boxes. The protein is Transcriptional repressor NrdR of Paenarthrobacter aurescens (strain TC1).